A 229-amino-acid chain; its full sequence is Uracil-DNA glycosylase (229 aa).

Residue Asp-64 is the Proton acceptor of the active site.

Belongs to the uracil-DNA glycosylase (UDG) superfamily. UNG family.

The protein resides in the cytoplasm. The enzyme catalyses Hydrolyzes single-stranded DNA or mismatched double-stranded DNA and polynucleotides, releasing free uracil.. In terms of biological role, excises uracil residues from the DNA which can arise as a result of misincorporation of dUMP residues by DNA polymerase or due to deamination of cytosine. This is Uracil-DNA glycosylase from Salmonella choleraesuis (strain SC-B67).